Here is a 398-residue protein sequence, read N- to C-terminus: Phosphoglycerate kinase (398 aa).

Substrate-binding positions include 24–26 (DFN), Arg-39, 62–65 (HFGR), Arg-121, and Arg-154. ATP is bound by residues Lys-205, Gly-296, Glu-327, and 354 to 357 (GGDS).

It belongs to the phosphoglycerate kinase family. As to quaternary structure, monomer.

It is found in the cytoplasm. It catalyses the reaction (2R)-3-phosphoglycerate + ATP = (2R)-3-phospho-glyceroyl phosphate + ADP. The protein operates within carbohydrate degradation; glycolysis; pyruvate from D-glyceraldehyde 3-phosphate: step 2/5. The polypeptide is Phosphoglycerate kinase (Trichodesmium erythraeum (strain IMS101)).